Reading from the N-terminus, the 473-residue chain is Transposase for insertion sequence element IS1151 (473 aa).

The protein belongs to the transposase 11 family.

Its function is as follows. Involved in the transposition of the insertion sequence. The chain is Transposase for insertion sequence element IS1151 (tnp) from Clostridium perfringens.